The following is a 238-amino-acid chain: MNPEQFQTALAEKGIELSDTQLKQFHDYFEMLVEWNEKMNLTAITDEKEVYLKHFYDSISAAFYVDFTKFDTICDVGAGAGFPSLPIKICFPHLEVSIVDSLKKRMTFLDALAEKLGLTDVHFYHDRAETFGQNKAHREKYDLVTARAVARMSVLSELCMPLVKKGGSFLVMKAAQAEQELQTAEKAIKLFGGKVEEHFAFSLPVEESERNIYVITKTKETPNKYPRKPGTPNKLPIE.

S-adenosyl-L-methionine is bound by residues glycine 77, phenylalanine 82, 128–129, and arginine 147; that span reads AE.

This sequence belongs to the methyltransferase superfamily. RNA methyltransferase RsmG family.

Its subcellular location is the cytoplasm. In terms of biological role, specifically methylates the N7 position of guanine in position 535 of 16S rRNA. In Listeria monocytogenes serotype 4b (strain F2365), this protein is Ribosomal RNA small subunit methyltransferase G.